Here is a 263-residue protein sequence, read N- to C-terminus: Putative hydro-lyase Pden_0321 (263 aa).

It belongs to the D-glutamate cyclase family.

In Paracoccus denitrificans (strain Pd 1222), this protein is Putative hydro-lyase Pden_0321.